The following is a 191-amino-acid chain: Large ribosomal subunit protein uL5 (191 aa).

The protein belongs to the universal ribosomal protein uL5 family. In terms of assembly, part of the 50S ribosomal subunit; part of the 5S rRNA/L5/L18/L25 subcomplex. Contacts the 5S rRNA and the P site tRNA. Forms a bridge to the 30S subunit in the 70S ribosome.

Functionally, this is one of the proteins that bind and probably mediate the attachment of the 5S RNA into the large ribosomal subunit, where it forms part of the central protuberance. In the 70S ribosome it contacts protein S13 of the 30S subunit (bridge B1b), connecting the 2 subunits; this bridge is implicated in subunit movement. Contacts the P site tRNA; the 5S rRNA and some of its associated proteins might help stabilize positioning of ribosome-bound tRNAs. The protein is Large ribosomal subunit protein uL5 of Thermobifida fusca (strain YX).